An 89-amino-acid chain; its full sequence is MPLSGDVKQKIMSDYATVDRDTGSPEVQVAMLTRRISDLTEHLKVHKHDHHSRRGLLLLVGRRRRLLNYLAKTDINRYRALIERLGLRR.

The protein belongs to the universal ribosomal protein uS15 family. In terms of assembly, part of the 30S ribosomal subunit. Forms a bridge to the 50S subunit in the 70S ribosome, contacting the 23S rRNA.

In terms of biological role, one of the primary rRNA binding proteins, it binds directly to 16S rRNA where it helps nucleate assembly of the platform of the 30S subunit by binding and bridging several RNA helices of the 16S rRNA. Functionally, forms an intersubunit bridge (bridge B4) with the 23S rRNA of the 50S subunit in the ribosome. This chain is Small ribosomal subunit protein uS15, found in Parafrankia sp. (strain EAN1pec).